The following is a 348-amino-acid chain: Photosystem II protein D1 (348 aa).

Helical transmembrane passes span 33–50 (YIGWFGILMFPLLVLATV), 122–137 (HFILGAGAYMGREWEF), and 146–160 (WIFVAFSAPLVAASA). Residue His-122 coordinates chlorophyll a. A pheophytin a-binding site is contributed by Tyr-130. Asp-174 and Glu-193 together coordinate [CaMn4O5] cluster. The helical transmembrane segment at 201–222 (FHILGVAAVFGGSLFSAMHGSL) threads the bilayer. His-202 serves as a coordination point for chlorophyll a. A quinone is bound by residues His-219 and 268–269 (SF). His-219 is a binding site for Fe cation. Residue His-276 participates in Fe cation binding. A helical transmembrane segment spans residues 278–292 (FLAAWPVIGIWFTAL). [CaMn4O5] cluster contacts are provided by His-336, Glu-337, Asp-346, and Ala-348.

This sequence belongs to the reaction center PufL/M/PsbA/D family. In terms of assembly, PSII is composed of 1 copy each of membrane proteins PsbA, PsbB, PsbC, PsbD, PsbE, PsbF, PsbH, PsbI, PsbJ, PsbK, PsbL, PsbM, PsbT, PsbX, PsbY, PsbZ, Psb30/Ycf12, at least 3 peripheral proteins of the oxygen-evolving complex and a large number of cofactors. It forms dimeric complexes. Requires The D1/D2 heterodimer binds P680, chlorophylls that are the primary electron donor of PSII, and subsequent electron acceptors. It shares a non-heme iron and each subunit binds pheophytin, quinone, additional chlorophylls, carotenoids and lipids. D1 provides most of the ligands for the Mn4-Ca-O5 cluster of the oxygen-evolving complex (OEC). There is also a Cl(-1) ion associated with D1 and D2, which is required for oxygen evolution. The PSII complex binds additional chlorophylls, carotenoids and specific lipids. as cofactor. Post-translationally, tyr-165 forms a radical intermediate that is referred to as redox-active TyrZ, YZ or Y-Z.

The protein localises to the plastid. It is found in the chloroplast thylakoid membrane. The enzyme catalyses 2 a plastoquinone + 4 hnu + 2 H2O = 2 a plastoquinol + O2. Photosystem II (PSII) is a light-driven water:plastoquinone oxidoreductase that uses light energy to abstract electrons from H(2)O, generating O(2) and a proton gradient subsequently used for ATP formation. It consists of a core antenna complex that captures photons, and an electron transfer chain that converts photonic excitation into a charge separation. The D1/D2 (PsbA/PsbD) reaction center heterodimer binds P680, the primary electron donor of PSII as well as several subsequent electron acceptors. This chain is Photosystem II protein D1, found in Heterocapsa pygmaea (Dinoflagellate).